The sequence spans 75 residues: Defensin-like protein 58 (75 aa).

The signal sequence occupies residues 1–23 (MNITKRYVVIFFLVMLTKSLSNS). 4 cysteine pairs are disulfide-bonded: cysteine 39-cysteine 73, cysteine 43-cysteine 66, cysteine 52-cysteine 71, and cysteine 56-cysteine 72.

Belongs to the DEFL family.

It is found in the secreted. This Arabidopsis thaliana (Mouse-ear cress) protein is Defensin-like protein 58.